Here is a 568-residue protein sequence, read N- to C-terminus: Cyclin-dependent kinase-like 2 (568 aa).

Residues 4–289 (YENLGLVGEG…CADLLRHDFF (286 aa)) enclose the Protein kinase domain. ATP contacts are provided by residues 10–18 (VGEGSYGMV) and Lys-33. The [NKR]KIAxRE motif lies at 45 to 51 (KKIAMRE). Asp-126 acts as the Proton acceptor in catalysis. Disordered stretches follow at residues 309–333 (DARNNSLPKKSQNRKKEKDDALGEE) and 545–568 (SHQGAGSPLSDDSEADLPRMEHQH). Positions 322 to 333 (RKKEKDDALGEE) are enriched in basic and acidic residues.

The protein belongs to the protein kinase superfamily. CMGC Ser/Thr protein kinase family. CDC2/CDKX subfamily. Expressed in testis, kidney, lung and brain.

Its subcellular location is the cytoplasm. It localises to the nucleus. It carries out the reaction L-seryl-[protein] + ATP = O-phospho-L-seryl-[protein] + ADP + H(+). The catalysed reaction is L-threonyl-[protein] + ATP = O-phospho-L-threonyl-[protein] + ADP + H(+). This Mus musculus (Mouse) protein is Cyclin-dependent kinase-like 2.